The sequence spans 312 residues: HPr kinase/phosphorylase (312 aa).

Catalysis depends on residues histidine 139 and lysine 160. 154 to 161 is an ATP binding site; it reads GSSGVGKS. Position 161 (serine 161) interacts with Mg(2+). The active-site Proton acceptor; for phosphorylation activity. Proton donor; for dephosphorylation activity is the aspartate 178. The segment at 202–211 is important for the catalytic mechanism of both phosphorylation and dephosphorylation; it reads LEIRGLGIIN. Glutamate 203 contacts Mg(2+). The active site involves arginine 244. Positions 265–270 are important for the catalytic mechanism of dephosphorylation; that stretch reads PVRPGR.

It belongs to the HPrK/P family. In terms of assembly, homohexamer. Mg(2+) is required as a cofactor.

The enzyme catalyses [HPr protein]-L-serine + ATP = [HPr protein]-O-phospho-L-serine + ADP + H(+). The catalysed reaction is [HPr protein]-O-phospho-L-serine + phosphate + H(+) = [HPr protein]-L-serine + diphosphate. In terms of biological role, catalyzes the ATP- as well as the pyrophosphate-dependent phosphorylation of a specific serine residue in HPr, a phosphocarrier protein of the phosphoenolpyruvate-dependent sugar phosphotransferase system (PTS). HprK/P also catalyzes the pyrophosphate-producing, inorganic phosphate-dependent dephosphorylation (phosphorolysis) of seryl-phosphorylated HPr (P-Ser-HPr). The two antagonistic activities of HprK/P are regulated by several intracellular metabolites, which change their concentration in response to the absence or presence of rapidly metabolisable carbon sources (glucose, fructose, etc.) in the growth medium. Therefore, by controlling the phosphorylation state of HPr, HPrK/P is a sensor enzyme that plays a major role in the regulation of carbon metabolism and sugar transport: it mediates carbon catabolite repression (CCR), and regulates PTS-catalyzed carbohydrate uptake and inducer exclusion. The protein is HPr kinase/phosphorylase of Listeria welshimeri serovar 6b (strain ATCC 35897 / DSM 20650 / CCUG 15529 / CIP 8149 / NCTC 11857 / SLCC 5334 / V8).